The chain runs to 339 residues: Glycerol-3-phosphate dehydrogenase [NAD(P)+] (339 aa).

NADPH-binding residues include S13, W14, and K108. Sn-glycerol 3-phosphate contacts are provided by K108, G139, and S141. A143 is a binding site for NADPH. 5 residues coordinate sn-glycerol 3-phosphate: K194, D247, S257, R258, and N259. The Proton acceptor role is filled by K194. Position 258 (R258) interacts with NADPH. NADPH contacts are provided by V282 and E284.

It belongs to the NAD-dependent glycerol-3-phosphate dehydrogenase family.

The protein localises to the cytoplasm. It carries out the reaction sn-glycerol 3-phosphate + NAD(+) = dihydroxyacetone phosphate + NADH + H(+). It catalyses the reaction sn-glycerol 3-phosphate + NADP(+) = dihydroxyacetone phosphate + NADPH + H(+). Its pathway is membrane lipid metabolism; glycerophospholipid metabolism. In terms of biological role, catalyzes the reduction of the glycolytic intermediate dihydroxyacetone phosphate (DHAP) to sn-glycerol 3-phosphate (G3P), the key precursor for phospholipid synthesis. The protein is Glycerol-3-phosphate dehydrogenase [NAD(P)+] of Streptococcus equi subsp. equi (strain 4047).